The following is a 98-amino-acid chain: NADH-ubiquinone oxidoreductase chain 4L (98 aa).

The next 3 helical transmembrane spans lie at 1–21 (MSLV…GLLM), 29–49 (SLLC…LTIL), and 61–81 (IILL…LVMV).

This sequence belongs to the complex I subunit 4L family. As to quaternary structure, core subunit of respiratory chain NADH dehydrogenase (Complex I) which is composed of 45 different subunits.

Its subcellular location is the mitochondrion inner membrane. It catalyses the reaction a ubiquinone + NADH + 5 H(+)(in) = a ubiquinol + NAD(+) + 4 H(+)(out). Its function is as follows. Core subunit of the mitochondrial membrane respiratory chain NADH dehydrogenase (Complex I) which catalyzes electron transfer from NADH through the respiratory chain, using ubiquinone as an electron acceptor. Part of the enzyme membrane arm which is embedded in the lipid bilayer and involved in proton translocation. In Muntiacus vuquangensis (Giant muntjac), this protein is NADH-ubiquinone oxidoreductase chain 4L (MT-ND4L).